A 64-amino-acid chain; its full sequence is Large ribosomal subunit protein uL30 (64 aa).

This sequence belongs to the universal ribosomal protein uL30 family. Part of the 50S ribosomal subunit.

The protein is Large ribosomal subunit protein uL30 of Syntrophus aciditrophicus (strain SB).